A 467-amino-acid polypeptide reads, in one-letter code: Ankyrin repeat and SOCS box protein 10 (467 aa).

ANK repeat units follow at residues 115-144 (ELTTPLHVAASRGHTEVLELLLRRRAKPDS), 147-176 (GGRTALHEACSAGHAACVRVLLVAGADPNT), 180-209 (DGKRPLHLCRGPGILECVELLLKFGAQVDG), 214-243 (EEETPLHIAARLGHVELADLLLRWGACPDV), 247-289 (EGWT…DADA), 293-322 (DKQRPLHLACRHGHSAVVQLLLSCGVNANA), and 326-361 (GGHTPLHCALLGPTTAVAHSPEHTVRDLLNHGAVRV). One can recognise an SOCS box domain in the interval 412 to 467 (YSSLFALVRQPRSLQHLCRCALRSHLEGCLPHALPRLPLPPRMLRFLQLDFEDLLY).

It belongs to the ankyrin SOCS box (ASB) family.

It is found in the nucleus. It localises to the cytoplasm. Its pathway is protein modification; protein ubiquitination. Its function is as follows. May be a substrate-recognition component of a SCF-like ECS (Elongin-Cullin-SOCS-box protein) E3 ubiquitin-protein ligase complex which mediates the ubiquitination and subsequent proteasomal degradation of target proteins. The sequence is that of Ankyrin repeat and SOCS box protein 10 (Asb10) from Mus musculus (Mouse).